Here is a 327-residue protein sequence, read N- to C-terminus: Biotin synthase (327 aa).

Residues 44-273 form the Radical SAM core domain; the sequence is FMGNKFDTCS…NAFLRFSGGR (230 aa). The [4Fe-4S] cluster site is built by Cys-62, Cys-66, and Cys-69. The [2Fe-2S] cluster site is built by Cys-138, Cys-198, and Arg-268.

The protein belongs to the radical SAM superfamily. Biotin synthase family. In terms of assembly, homodimer. Requires [4Fe-4S] cluster as cofactor. It depends on [2Fe-2S] cluster as a cofactor.

The catalysed reaction is (4R,5S)-dethiobiotin + (sulfur carrier)-SH + 2 reduced [2Fe-2S]-[ferredoxin] + 2 S-adenosyl-L-methionine = (sulfur carrier)-H + biotin + 2 5'-deoxyadenosine + 2 L-methionine + 2 oxidized [2Fe-2S]-[ferredoxin]. It participates in cofactor biosynthesis; biotin biosynthesis; biotin from 7,8-diaminononanoate: step 2/2. In terms of biological role, catalyzes the conversion of dethiobiotin (DTB) to biotin by the insertion of a sulfur atom into dethiobiotin via a radical-based mechanism. The protein is Biotin synthase of Parabacteroides distasonis (strain ATCC 8503 / DSM 20701 / CIP 104284 / JCM 5825 / NCTC 11152).